Here is a 357-residue protein sequence, read N- to C-terminus: Putative electron transport protein YccM (357 aa).

The Cytoplasmic segment spans residues 1–36; that stretch reads MAENKRTRWQRRPGTTGGKLPWNDWRNATTWRKATQ. Residues 37 to 54 traverse the membrane as a helical segment; the sequence is LLLLAMNIYIAITFWYWV. Topologically, residues 55–91 are periplasmic; that stretch reads RYYETASSTTFVARPGGIEGWLPIAGLMNLKYSLVTG. Residues 92–114 traverse the membrane as a helical segment; that stretch reads QLPSVHAAAMLLLVAFIVISLLL. Residues 115–158 are Cytoplasmic-facing; sequence KKAFCSWLCPVGTLSELIGDLGNKLFGRQCVLPRWLDIPLRGVK. Residues 159–181 traverse the membrane as a helical segment; sequence YLLLSFFIYIALLMPAQAIHYFM. Topologically, residues 182-195 are periplasmic; that stretch reads LSPYSVVMDVKMLD. The chain crosses the membrane as a helical span at residues 196–218; it reads FFRHMGTATLISVTVLLIASLFI. The Cytoplasmic segment spans residues 219–309; sequence RHAWCRYLCP…KPAANKKAFA (91 aa). 2 consecutive 4Fe-4S ferredoxin-type domains span residues 242–270 and 269–299; these read FKIR…VDKL and KLIQ…FSLQ. The [4Fe-4S] cluster site is built by cysteine 251, cysteine 254, cysteine 257, cysteine 261, cysteine 278, cysteine 281, cysteine 284, and cysteine 288. Residues 310-332 traverse the membrane as a helical segment; it reads LSGWLMTLLVLGIMFAVIGYAMY. Residues 333–357 lie on the Periplasmic side of the membrane; the sequence is AGVWQSPVPEELYRRLIPQAPMIGH.

The protein localises to the cell inner membrane. The polypeptide is Putative electron transport protein YccM (yccM) (Escherichia coli (strain K12)).